A 536-amino-acid chain; its full sequence is Protein ST7 homolog (536 aa).

Helical transmembrane passes span 3-23 (CSWT…LFFL) and 49-69 (FYVA…IFEW). Residues 192-219 (AEEDTETVAQAENVLRRALRAIENTLST) adopt a coiled-coil conformation. The chain crosses the membrane as a helical span at residues 464–484 (STLGMLIQTFACLAICILAVL).

It belongs to the ST7 family.

The protein resides in the membrane. This Caenorhabditis briggsae protein is Protein ST7 homolog.